Here is a 468-residue protein sequence, read N- to C-terminus: Cysteine--tRNA ligase (468 aa).

Position 27 (Cys27) interacts with Zn(2+). The short motif at 29-39 (PTVYDDAHLGH) is the 'HIGH' region element. Residues Cys204, His234, and Glu238 each contribute to the Zn(2+) site. Positions 266 to 270 (KMSKS) match the 'KMSKS' region motif. Lys269 lines the ATP pocket.

Belongs to the class-I aminoacyl-tRNA synthetase family. In terms of assembly, monomer. Requires Zn(2+) as cofactor.

Its subcellular location is the cytoplasm. It catalyses the reaction tRNA(Cys) + L-cysteine + ATP = L-cysteinyl-tRNA(Cys) + AMP + diphosphate. This is Cysteine--tRNA ligase from Campylobacter hominis (strain ATCC BAA-381 / DSM 21671 / CCUG 45161 / LMG 19568 / NCTC 13146 / CH001A).